The chain runs to 222 residues: uncharacterized protein (222 aa).

Residues 7-26 (ICLVSLICISGIYFGYQYYQ) form a helical membrane-spanning segment. Residues 139 to 222 (CRSNAGYKVQ…AYNKQSCVLK (84 aa)) form the SPOR domain.

The protein resides in the membrane. This is an uncharacterized protein from Rickettsia prowazekii (strain Madrid E).